The primary structure comprises 179 residues: Bifunctional protein PyrR (179 aa).

The PRPP-binding motif lies at Val100–Thr112.

It belongs to the purine/pyrimidine phosphoribosyltransferase family. PyrR subfamily. As to quaternary structure, homodimer and homohexamer; in equilibrium.

The catalysed reaction is UMP + diphosphate = 5-phospho-alpha-D-ribose 1-diphosphate + uracil. Functionally, regulates transcriptional attenuation of the pyrimidine nucleotide (pyr) operon by binding in a uridine-dependent manner to specific sites on pyr mRNA. This disrupts an antiterminator hairpin in the RNA and favors formation of a downstream transcription terminator, leading to a reduced expression of downstream genes. In terms of biological role, also displays a weak uracil phosphoribosyltransferase activity which is not physiologically significant. This Geobacillus thermodenitrificans (strain NG80-2) protein is Bifunctional protein PyrR.